Consider the following 314-residue polypeptide: Trihelix transcription factor ASR3 (314 aa).

The disordered stretch occupies residues 1–34 (MALEQLGLGVSAVDGGENSSAPSNDGGDDGVKTA). Residues 38–104 (RWTRQEILVL…QCRKRWSNLA (67 aa)) enclose the Myb-like domain. A Nuclear localization signal motif is present at residues 84-91 (CKRHGVNR). An EAR 1 motif is present at residues 161–165 (LSLGL). Residue Thr-189 is modified to Phosphothreonine; by MAPK4. Residues 207–255 (CVADQGRVKEKQPEAANVEGGSTSQEERKRKRTSFGEKEEEEEEGETKK) form a disordered region. Residues 280–284 (LNLKL) carry the EAR 2 motif.

Homodimer. Interacts directly with MPK4. Phosphorylated on Thr-189 by MPK4 in response to microbe-associated molecular patterns (MAMPs, e.g. flg22, elf18, chitin, and LPS). This phosphorylation enhances DNA-binding and thus negatively regulates immune gene expression.

Its subcellular location is the nucleus. In terms of biological role, transcriptional repressor that binds DNA and plays a negative role in regulating microbe-associated molecular patterns-(MAMPs, e.g. flg22, elf18, chitin, and LPS) triggered immunity (PTI) by negatively regulating immune gene expression. The sequence is that of Trihelix transcription factor ASR3 from Arabidopsis thaliana (Mouse-ear cress).